Consider the following 546-residue polypeptide: Probable protein kinase UbiB (546 aa).

Positions 124–502 (DFDITPLASA…RVKQGQSRYL (379 aa)) constitute a Protein kinase domain. ATP is bound by residues 130–138 (LASASIAQV) and Lys153. Residue Asp288 is the Proton acceptor of the active site. 2 helical membrane passes run 501-518 (YLFGIGATLMLSSTLLFI) and 523-542 (WGMSPGWLMAGGILVWLIGW).

It belongs to the ABC1 family. UbiB subfamily.

It localises to the cell inner membrane. The protein operates within cofactor biosynthesis; ubiquinone biosynthesis [regulation]. Is probably a protein kinase regulator of UbiI activity which is involved in aerobic coenzyme Q (ubiquinone) biosynthesis. The protein is Probable protein kinase UbiB of Cronobacter sakazakii (strain ATCC BAA-894) (Enterobacter sakazakii).